Consider the following 497-residue polypeptide: Cytochrome P450 2D6 (497 aa).

Residue Asp-301 coordinates substrate. Cys-443 contributes to the heme binding site.

Belongs to the cytochrome P450 family. It depends on heme as a cofactor.

It localises to the endoplasmic reticulum membrane. The protein resides in the microsome membrane. The enzyme catalyses (5Z,8Z,11Z,14Z)-eicosatetraenoate + reduced [NADPH--hemoprotein reductase] + O2 = (8R,9S)-epoxy-(5Z,11Z,14Z)-eicosatrienoate + oxidized [NADPH--hemoprotein reductase] + H2O + H(+). It catalyses the reaction (5Z,8Z,11Z,14Z)-eicosatetraenoate + reduced [NADPH--hemoprotein reductase] + O2 = (11R,12S)-epoxy-(5Z,8Z,14Z)-eicosatrienoate + oxidized [NADPH--hemoprotein reductase] + H2O + H(+). The catalysed reaction is (5Z,8Z,11Z,14Z)-eicosatetraenoate + reduced [NADPH--hemoprotein reductase] + O2 = (14S,15R)-epoxy-(5Z,8Z,11Z)-eicosatrienoate + oxidized [NADPH--hemoprotein reductase] + H2O + H(+). It carries out the reaction N-(5Z,8Z,11Z,14Z-eicosatetraenoyl)-ethanolamine + reduced [NADPH--hemoprotein reductase] + O2 = N-(8,9-epoxy-5Z,11Z,14Z-eicosatrienoyl)-ethanolamine + oxidized [NADPH--hemoprotein reductase] + H2O + H(+). The enzyme catalyses N-(5Z,8Z,11Z,14Z-eicosatetraenoyl)-ethanolamine + reduced [NADPH--hemoprotein reductase] + O2 = N-(11,12-epoxy-5Z,8Z,14Z-eicosatrienoyl)-ethanolamine + oxidized [NADPH--hemoprotein reductase] + H2O + H(+). It catalyses the reaction N-(5Z,8Z,11Z,14Z-eicosatetraenoyl)-ethanolamine + reduced [NADPH--hemoprotein reductase] + O2 = N-(14,15-epoxy-5Z,8Z,11Z-eicosatrienoyl)-ethanolamine + oxidized [NADPH--hemoprotein reductase] + H2O + H(+). The catalysed reaction is N-(5Z,8Z,11Z,14Z-eicosatetraenoyl)-ethanolamine + reduced [NADPH--hemoprotein reductase] + O2 = N-(20-hydroxy-5Z,8Z,11Z,14Z-eicosatetraenoyl)-ethanolamine + oxidized [NADPH--hemoprotein reductase] + H2O + H(+). It carries out the reaction (5Z,8Z,11Z,14Z,17Z)-eicosapentaenoate + reduced [NADPH--hemoprotein reductase] + O2 = (17S,18R)-epoxy-(5Z,8Z,11Z,14Z)-eicosatetraenoate + oxidized [NADPH--hemoprotein reductase] + H2O + H(+). The enzyme catalyses (4Z,7Z,10Z,13Z,16Z,19Z)-docosahexaenoate + reduced [NADPH--hemoprotein reductase] + O2 = (19R,20S)-epoxy-(4Z,7Z,10Z,13Z,16Z)-docosapentaenoate + oxidized [NADPH--hemoprotein reductase] + H2O + H(+). It catalyses the reaction (4Z,7Z,10Z,13Z,16Z,19Z)-docosahexaenoate + reduced [NADPH--hemoprotein reductase] + O2 = (19S,20R)-epoxy-(4Z,7Z,10Z,13Z,16Z)-docosapentaenoate + oxidized [NADPH--hemoprotein reductase] + H2O + H(+). The catalysed reaction is cholesterol + reduced [NADPH--hemoprotein reductase] + O2 = 25-hydroxycholesterol + oxidized [NADPH--hemoprotein reductase] + H2O + H(+). It carries out the reaction all-trans-retinol + reduced [NADPH--hemoprotein reductase] + O2 = all-trans-retinal + oxidized [NADPH--hemoprotein reductase] + 2 H2O + H(+). Its pathway is cofactor metabolism; retinol metabolism. The protein operates within lipid metabolism; fatty acid metabolism. It participates in steroid metabolism; cholesterol metabolism. Functionally, a cytochrome P450 monooxygenase involved in the metabolism of fatty acids, steroids and retinoids. Mechanistically, uses molecular oxygen inserting one oxygen atom into a substrate, and reducing the second into a water molecule, with two electrons provided by NADPH via cytochrome P450 reductase (NADPH--hemoprotein reductase). Catalyzes the epoxidation of double bonds of polyunsaturated fatty acids (PUFA). Metabolizes endocannabinoid arachidonoylethanolamide (anandamide) to 20-hydroxyeicosatetraenoic acid ethanolamide (20-HETE-EA) and 8,9-, 11,12-, and 14,15-epoxyeicosatrienoic acid ethanolamides (EpETrE-EAs), potentially modulating endocannabinoid system signaling. Catalyzes the hydroxylation of carbon-hydrogen bonds. Metabolizes cholesterol toward 25-hydroxycholesterol, a physiological regulator of cellular cholesterol homeostasis. Catalyzes the oxidative transformations of all-trans retinol to all-trans retinal, a precursor for the active form all-trans-retinoic acid. Also involved in the oxidative metabolism of drugs such as antiarrhythmics, adrenoceptor antagonists, and tricyclic antidepressants. This chain is Cytochrome P450 2D6 (CYP2D6), found in Pan troglodytes (Chimpanzee).